The chain runs to 316 residues: Low affinity immunoglobulin gamma Fc region receptor II-a (316 aa).

A signal peptide spans 1-35 (MAMETQMSQNVCPRNLWLLQPLTVLLLLASADSQA). The Extracellular segment spans residues 36–216 (APPKAVLKLE…PSVGSSSPVG (181 aa)). Ig-like C2-type domains follow at residues 38-117 (PKAV…VHLT) and 121-203 (EWLV…VTIT). 2 disulfide bridges follow: cysteine 61–cysteine 103 and cysteine 142–cysteine 186. Residues asparagine 96, asparagine 170, and asparagine 177 are each glycosylated (N-linked (GlcNAc...) asparagine). A helical transmembrane segment spans residues 217 to 239 (IIVAVVIATAVAAIVAAVVALIY). Topologically, residues 240–316 (CRKKRISANS…PPNDHVNSNN (77 aa)) are cytoplasmic. 2 positions are modified to phosphotyrosine; by SRC-type Tyr-kinases: tyrosine 287 and tyrosine 303.

In terms of assembly, interacts with INPP5D/SHIP1 and INPPL1/SHIP2, regulating its function. Interacts with APCS and FGR. Interacts with HCK. Post-translationally, phosphorylated by SRC-type Tyr-kinases such as HCK, LYN, BLK, FYN and SYK.

It localises to the cell membrane. Binds to the Fc region of immunoglobulins gamma. Low affinity receptor. By binding to IgG it initiates cellular responses against pathogens and soluble antigens. Promotes phagocytosis of opsonized antigens. This is Low affinity immunoglobulin gamma Fc region receptor II-a (FCGR2A) from Pan troglodytes (Chimpanzee).